Reading from the N-terminus, the 361-residue chain is Peptide chain release factor 1 (361 aa).

At Q236 the chain carries N5-methylglutamine.

Belongs to the prokaryotic/mitochondrial release factor family. In terms of processing, methylated by PrmC. Methylation increases the termination efficiency of RF1.

Its subcellular location is the cytoplasm. Its function is as follows. Peptide chain release factor 1 directs the termination of translation in response to the peptide chain termination codons UAG and UAA. This chain is Peptide chain release factor 1, found in Lactobacillus delbrueckii subsp. bulgaricus (strain ATCC BAA-365 / Lb-18).